Here is a 128-residue protein sequence, read N- to C-terminus: Aspartate 1-decarboxylase (128 aa).

Residue Ser25 is the Schiff-base intermediate with substrate; via pyruvic acid of the active site. Pyruvic acid (Ser) is present on Ser25. Thr57 is a substrate binding site. Tyr58 serves as the catalytic Proton donor. A substrate-binding site is contributed by 73–75 (GSA).

It belongs to the PanD family. As to quaternary structure, heterooctamer of four alpha and four beta subunits. It depends on pyruvate as a cofactor. In terms of processing, is synthesized initially as an inactive proenzyme, which is activated by self-cleavage at a specific serine bond to produce a beta-subunit with a hydroxyl group at its C-terminus and an alpha-subunit with a pyruvoyl group at its N-terminus.

It localises to the cytoplasm. It carries out the reaction L-aspartate + H(+) = beta-alanine + CO2. It functions in the pathway cofactor biosynthesis; (R)-pantothenate biosynthesis; beta-alanine from L-aspartate: step 1/1. Catalyzes the pyruvoyl-dependent decarboxylation of aspartate to produce beta-alanine. This is Aspartate 1-decarboxylase from Burkholderia ambifaria (strain ATCC BAA-244 / DSM 16087 / CCUG 44356 / LMG 19182 / AMMD) (Burkholderia cepacia (strain AMMD)).